The chain runs to 307 residues: UPF0276 protein PM0211 (307 aa).

It belongs to the UPF0276 family.

The protein is UPF0276 protein PM0211 of Pasteurella multocida (strain Pm70).